The sequence spans 893 residues: DNA mismatch repair protein MutS (893 aa).

638–645 (GPNMAGKS) contributes to the ATP binding site.

The protein belongs to the DNA mismatch repair MutS family.

This protein is involved in the repair of mismatches in DNA. It is possible that it carries out the mismatch recognition step. This protein has a weak ATPase activity. In Lawsonia intracellularis (strain PHE/MN1-00), this protein is DNA mismatch repair protein MutS.